We begin with the raw amino-acid sequence, 150 residues long: AGADEERAETARLSSFIGAIAIGDLVKVQDDEVGDGTTSVTVLAAELLRLGGSLADSYLDEGFLLDKKQLIYNYPEQLFGAAGVMAIEHADFAGVERLALVTGGEIASTFDHPELVKGATQQILDEAERQVLLSAAEAAEVILRVDNIIK.

Residue aspartate 35 participates in Mg(2+) binding. Residues glycine 36, threonine 37, threonine 38, and serine 39 each contribute to the ADP site. ATP contacts are provided by glycine 36, threonine 37, and threonine 38.

Belongs to the TCP-1 chaperonin family. In terms of assembly, component of the chaperonin-containing T-complex (TRiC), a hexadecamer composed of two identical back-to-back stacked rings enclosing a protein folding chamber. Each ring is made up of eight different subunits: TCP1/CCT1, CCT2, CCT3, CCT4, CCT5, CCT6A/CCT6, CCT7, CCT8. Interacts with PACRG. Interacts with FLCN. Interacts with DLEC1. Interacts with SVEP1.

The protein localises to the cytoplasm. The catalysed reaction is ATP + H2O = ADP + phosphate + H(+). Component of the chaperonin-containing T-complex (TRiC), a molecular chaperone complex that assists the folding of actin, tubulin and other proteins upon ATP hydrolysis. The TRiC complex mediates the folding of WRAP53/TCAB1, thereby regulating telomere maintenance. As part of the TRiC complex may play a role in the assembly of BBSome, a complex involved in ciliogenesis regulating transports vesicles to the cilia. The protein is T-complex protein 1 subunit beta of Mesocricetus auratus (Golden hamster).